The following is a 413-amino-acid chain: uncharacterized protein (413 aa).

The protein belongs to the mimivirus L17x/L18x family.

This is an uncharacterized protein from Acanthamoeba polyphaga (Amoeba).